The primary structure comprises 427 residues: Enolase (427 aa).

Gln-163 contacts (2R)-2-phosphoglycerate. Catalysis depends on Glu-205, which acts as the Proton donor. Asp-242, Glu-285, and Asp-312 together coordinate Mg(2+). Residues Lys-337, Arg-366, Ser-367, and Lys-388 each coordinate (2R)-2-phosphoglycerate. Lys-337 (proton acceptor) is an active-site residue.

This sequence belongs to the enolase family. The cofactor is Mg(2+).

The protein localises to the cytoplasm. It localises to the secreted. Its subcellular location is the cell surface. It catalyses the reaction (2R)-2-phosphoglycerate = phosphoenolpyruvate + H2O. Its pathway is carbohydrate degradation; glycolysis; pyruvate from D-glyceraldehyde 3-phosphate: step 4/5. In terms of biological role, catalyzes the reversible conversion of 2-phosphoglycerate (2-PG) into phosphoenolpyruvate (PEP). It is essential for the degradation of carbohydrates via glycolysis. This chain is Enolase, found in Nitrobacter hamburgensis (strain DSM 10229 / NCIMB 13809 / X14).